The chain runs to 1256 residues: Bifunctional autolysin (1256 aa).

Positions 1–29 are cleaved as a signal peptide; sequence MAKKFNYKLPSMVALTLVGSAVTAHQVQA. Residues 103–138 show a composition bias toward polar residues; that stretch reads GDTRANQSATTNNTQPVAKSTSTTAPKTNTNVTNAG. Disordered regions lie at residues 103-151, 172-214, and 419-440; these read GDTR…NSEN, KTAA…KTSL, and TQST…PSTG. Low complexity-rich tracts occupy residues 172-196 and 421-439; these read KTAA…KVTT and STTT…KPST. An N-acetylmuramoyl-L-alanine amidase region spans residues 199–775; the sequence is ASAQPRSVAA…AVAQPKTAVK (577 aa). GW domains follow at residues 443-517, 519-593, 612-686, 688-762, 784-859, 861-936, and 943-1017; these read TVAA…YNTA, SPVN…DTAK, TVSS…YNNA, SPVN…VPAA, TTQT…VQNL, KEVK…APTA, and AAKD…KELI. The interval 776–1256 is endo-beta-N-acetylglucosaminidase; the sequence is AYTVTKPQTT…GKYFDIPQYK (481 aa).

It in the N-terminal section; belongs to the N-acetylmuramoyl-L-alanine amidase 2 family. This sequence in the C-terminal section; belongs to the glycosyl hydrolase 73 family. As to quaternary structure, oligomer; forms a ring structure at the cell surface which is important for efficient partitioning of daughter cells after cell division. In terms of processing, undergoes proteolytic processing to generate the two extracellular lytic enzymes, probably at the septal region on the cell surface.

It is found in the secreted. It carries out the reaction Hydrolyzes the link between N-acetylmuramoyl residues and L-amino acid residues in certain cell-wall glycopeptides.. The catalysed reaction is an N(4)-(oligosaccharide-(1-&gt;3)-[oligosaccharide-(1-&gt;6)]-beta-D-Man-(1-&gt;4)-beta-D-GlcNAc-(1-&gt;4)-alpha-D-GlcNAc)-L-asparaginyl-[protein] + H2O = an oligosaccharide-(1-&gt;3)-[oligosaccharide-(1-&gt;6)]-beta-D-Man-(1-&gt;4)-D-GlcNAc + N(4)-(N-acetyl-beta-D-glucosaminyl)-L-asparaginyl-[protein]. Endohydrolysis of the di-N-acetylchitobiosyl unit in high-mannose glycopeptides and glycoproteins containing the -[(Man)5(GlcNAc)2]-Asn structure. One N-acetyl-D-glucosamine residue remains attached to the protein; the rest of the oligosaccharide is released intact. Cleaves the peptidoglycan connecting the daughter cells at the end of the cell division cycle, resulting in the separation of the two newly divided cells. Acts as an autolysin in penicillin-induced lysis. The sequence is that of Bifunctional autolysin (atl) from Staphylococcus aureus (strain NCTC 8325 / PS 47).